A 623-amino-acid chain; its full sequence is Regulatory solute carrier protein family 1 member 1 (623 aa).

3 stretches are compositionally biased toward polar residues: residues 1–16 (MSSL…QAHP), 83–99 (CASS…PAIP), and 133–144 (EASLSVTTTRMQ). Disordered stretches follow at residues 1 to 48 (MSSL…PDSI), 71 to 99 (RKEQ…PAIP), 116 to 189 (SAEG…APHD), and 433 to 493 (EELT…PHCT). Basic and acidic residues-rich tracts occupy residues 150 to 159 (IGEKGWHPEY), 170 to 180 (QHEEPRNEQHE), and 460 to 473 (LVDK…RESV). Positions 474 to 491 (NESSLVTLDSAKTSNQPH) are enriched in polar residues. Positions 577–617 (IFPAADIDRILRAGFTLQEALGALHRVGGNADLALLVLLAK) constitute a UBA domain.

Interacts with YRDC. In terms of tissue distribution, renal outer cortex and outer medulla, small intestine and liver.

Its subcellular location is the cell membrane. The protein resides in the nucleus. The protein localises to the golgi apparatus. It is found in the trans-Golgi network. Functionally, mediates transcriptional and post-transcriptional regulation of SLC5A1. Inhibits a dynamin and PKC-dependent exocytotic pathway of SLC5A1. Also involved in transcriptional regulation of SLC22A2. Exhibits glucose-dependent, short-term inhibition of SLC5A1 and SLC22A2 by inhibiting the release of vesicles from the trans-Golgi network. The protein is Regulatory solute carrier protein family 1 member 1 (RSC1A1) of Sus scrofa (Pig).